Reading from the N-terminus, the 584-residue chain is Membrane frizzled-related protein (584 aa).

At 1-69 the chain is on the cytoplasmic side; that stretch reads MKDYDDVILR…QPDCHFSWFC (69 aa). The helical; Signal-anchor for type II membrane protein transmembrane segment at 70-90 threads the bilayer; that stretch reads ILLLSGLLLLLLGLLVAVILA. At 91–584 the chain is on the extracellular side; it reads QLQATSLPRT…AASLEACSQP (494 aa). The interval 108–140 is disordered; that stretch reads RGLTPMGVIPSTTPNTTTTTTTTTPARTGQQEA. Low complexity predominate over residues 119–132; it reads TTPNTTTTTTTTTP. 2 cysteine pairs are disulfide-bonded: Cys150–Cys176 and Cys203–Cys222. The CUB 1 domain occupies 150–259; sequence CGGLLPGPSG…SGFQAWYQAV (110 aa). Asn233 carries an N-linked (GlcNAc...) asparagine glycan. The LDL-receptor class A 1 domain occupies 265–301; it reads SCAHNEFHCDLLLCLKRDSVCDGITECADGSDEANCS. Disulfide bonds link Cys266-Cys278, Cys273-Cys291, Cys285-Cys300, Cys307-Cys333, and Cys360-Cys383. Residues 307–420 form the CUB 2 domain; it reads CGGNLTGLYG…GGFLATYQAI (114 aa). Asn421 carries N-linked (GlcNAc...) asparagine glycosylation. The region spanning 426 to 460 is the LDL-receptor class A 2 domain; that stretch reads GCPWAEFCQSGGYRDLQWMCDLWKDCANDSNDNCS. 7 disulfides stabilise this stretch: Cys433/Cys451, Cys445/Cys459, Cys471/Cys533, Cys479/Cys526, Cys517/Cys554, Cys543/Cys581, and Cys547/Cys569. A glycan (N-linked (GlcNAc...) asparagine) is linked at Asn458. One can recognise an FZ domain in the interval 466 to 584; sequence QPDLTCEPVQ…AASLEACSQP (119 aa).

As to quaternary structure, interacts with C1QTNF5. In terms of tissue distribution, expressed in retinal pigment epithelium and ciliary epithelium of the eye.

The protein resides in the apical cell membrane. In terms of biological role, may play a role in eye development. The polypeptide is Membrane frizzled-related protein (Mfrp) (Mus musculus (Mouse)).